The primary structure comprises 273 residues: Dermonecrotic toxin SdSicTox-betaIF1 (273 aa).

The active site involves H5. Positions 25 and 27 each coordinate Mg(2+). H41 acts as the Nucleophile in catalysis. Intrachain disulfides connect C45/C51 and C47/C189.

The protein belongs to the arthropod phospholipase D family. Class II subfamily. The cofactor is Mg(2+). Expressed by the venom gland.

The protein localises to the secreted. The enzyme catalyses an N-(acyl)-sphingosylphosphocholine = an N-(acyl)-sphingosyl-1,3-cyclic phosphate + choline. It catalyses the reaction an N-(acyl)-sphingosylphosphoethanolamine = an N-(acyl)-sphingosyl-1,3-cyclic phosphate + ethanolamine. The catalysed reaction is a 1-acyl-sn-glycero-3-phosphocholine = a 1-acyl-sn-glycero-2,3-cyclic phosphate + choline. It carries out the reaction a 1-acyl-sn-glycero-3-phosphoethanolamine = a 1-acyl-sn-glycero-2,3-cyclic phosphate + ethanolamine. In terms of biological role, dermonecrotic toxins cleave the phosphodiester linkage between the phosphate and headgroup of certain phospholipids (sphingolipid and lysolipid substrates), forming an alcohol (often choline) and a cyclic phosphate. This toxin acts on sphingomyelin (SM). It may also act on ceramide phosphoethanolamine (CPE), lysophosphatidylcholine (LPC) and lysophosphatidylethanolamine (LPE), but not on lysophosphatidylserine (LPS), and lysophosphatidylglycerol (LPG). It acts by transphosphatidylation, releasing exclusively cyclic phosphate products as second products. Induces dermonecrosis, hemolysis, increased vascular permeability, edema, inflammatory response, and platelet aggregation. The polypeptide is Dermonecrotic toxin SdSicTox-betaIF1 (Sicarius cf. damarensis (strain GJB-2008) (Six-eyed sand spider)).